The primary structure comprises 938 residues: Isoleucine--tRNA ligase (938 aa).

The 'HIGH' region signature appears at 58-68; that stretch reads PYANGNIHIGH. E561 is a binding site for L-isoleucyl-5'-AMP. The 'KMSKS' region signature appears at 602–606; that stretch reads KMSKS. K605 contacts ATP. Positions 901, 904, 921, and 924 each coordinate Zn(2+).

Belongs to the class-I aminoacyl-tRNA synthetase family. IleS type 1 subfamily. In terms of assembly, monomer. It depends on Zn(2+) as a cofactor.

The protein resides in the cytoplasm. It catalyses the reaction tRNA(Ile) + L-isoleucine + ATP = L-isoleucyl-tRNA(Ile) + AMP + diphosphate. Functionally, catalyzes the attachment of isoleucine to tRNA(Ile). As IleRS can inadvertently accommodate and process structurally similar amino acids such as valine, to avoid such errors it has two additional distinct tRNA(Ile)-dependent editing activities. One activity is designated as 'pretransfer' editing and involves the hydrolysis of activated Val-AMP. The other activity is designated 'posttransfer' editing and involves deacylation of mischarged Val-tRNA(Ile). This is Isoleucine--tRNA ligase from Yersinia enterocolitica serotype O:8 / biotype 1B (strain NCTC 13174 / 8081).